A 186-amino-acid polypeptide reads, in one-letter code: Acetyltransferase PA5475 (186 aa).

The region spanning 31-186 (VLIRPLREED…STQVIHRLAL (156 aa)) is the N-acetyltransferase domain. CoA is bound by residues 117 to 119 (VTI), Gly125, Asn156, and 161 to 163 (DLC).

Catalyzes the transfer of an acetyl group from acetyl coenzyme A (AcCoA) to an acceptor substrate and releases both CoA and the acetylated product. It prefers the antibiotic chloramphenicol. The polypeptide is Acetyltransferase PA5475 (Pseudomonas aeruginosa (strain ATCC 15692 / DSM 22644 / CIP 104116 / JCM 14847 / LMG 12228 / 1C / PRS 101 / PAO1)).